The chain runs to 272 residues: Shikimate dehydrogenase (NADP(+)) (272 aa).

Shikimate is bound by residues 14-16 (SKS) and T61. The active-site Proton acceptor is the K65. NADP(+) is bound at residue E77. Residues N86 and D102 each coordinate shikimate. Residues 126–130 (GAGGA), 149–154 (NRTVSR), and M213 each bind NADP(+). Y215 provides a ligand contact to shikimate. G237 contributes to the NADP(+) binding site.

Belongs to the shikimate dehydrogenase family. As to quaternary structure, homodimer.

It catalyses the reaction shikimate + NADP(+) = 3-dehydroshikimate + NADPH + H(+). The protein operates within metabolic intermediate biosynthesis; chorismate biosynthesis; chorismate from D-erythrose 4-phosphate and phosphoenolpyruvate: step 4/7. Involved in the biosynthesis of the chorismate, which leads to the biosynthesis of aromatic amino acids. Catalyzes the reversible NADPH linked reduction of 3-dehydroshikimate (DHSA) to yield shikimate (SA). This Shigella boydii serotype 4 (strain Sb227) protein is Shikimate dehydrogenase (NADP(+)).